The sequence spans 519 residues: Bifunctional dihydrofolate reductase-thymidylate synthase 1 (519 aa).

A2 is subject to N-acetylalanine. The DHFR domain occupies 21 to 198 (TYQVVVAATK…LRFCFTTFVR (178 aa)). V25 contacts substrate. NADP(+) is bound by residues A27 and 33 to 39 (GIGKDGK). D47 is a substrate binding site. NADP(+) contacts are provided by residues 71 to 73 (RKT) and 92 to 95 (LTRS). I134 lines the substrate pocket. 135–142 (GGGDILRE) contributes to the NADP(+) binding site. T155 contacts substrate. Residues 201–234 (SSADESSDESNGSQSLQFDGKKFLFLPKMVFDQH) are hinge. Residues 235–519 (EEFLYLNMVE…HKKIEMKMAV (285 aa)) are thymidylate synthase. Residue R256 coordinates dUMP. C401 is a catalytic residue. DUMP contacts are provided by residues H402, 420-424 (QRSAD), N432, and 462-464 (HVY).

The protein in the N-terminal section; belongs to the dihydrofolate reductase family. In the C-terminal section; belongs to the thymidylate synthase family. In terms of assembly, heterodimer or homodimer.

It catalyses the reaction (6S)-5,6,7,8-tetrahydrofolate + NADP(+) = 7,8-dihydrofolate + NADPH + H(+). It carries out the reaction dUMP + (6R)-5,10-methylene-5,6,7,8-tetrahydrofolate = 7,8-dihydrofolate + dTMP. It participates in cofactor biosynthesis; tetrahydrofolate biosynthesis; 5,6,7,8-tetrahydrofolate from 7,8-dihydrofolate: step 1/1. Its function is as follows. Bifunctional enzyme. Involved in de novo dTMP biosynthesis. Key enzyme in folate metabolism. Can play two different roles depending on the source of dihydrofolate: de novo synthesis of tetrahydrofolate or recycling of the dihydrofolate released as one of the end products of the TS catalyzed reaction. Catalyzes an essential reaction for de novo glycine and purine synthesis, DNA precursor synthesis, and for the conversion of dUMP to dTMP. The protein is Bifunctional dihydrofolate reductase-thymidylate synthase 1 (THY-1) of Arabidopsis thaliana (Mouse-ear cress).